The following is a 102-amino-acid chain: Defensin-like protein 285 (102 aa).

The signal sequence occupies residues 1–28 (MTNLYFKTAFLLSLLLLSFSYQSKLIEA). Disulfide bonds link Cys-39-Cys-100, Cys-64-Cys-83, Cys-70-Cys-88, and Cys-75-Cys-90.

The protein belongs to the DEFL family.

The protein localises to the secreted. This Arabidopsis thaliana (Mouse-ear cress) protein is Defensin-like protein 285.